The sequence spans 441 residues: Histidinol dehydrogenase (441 aa).

Positions 136, 197, and 220 each coordinate NAD(+). Substrate contacts are provided by Ser243, Gln265, and His268. The Zn(2+) site is built by Gln265 and His268. Catalysis depends on proton acceptor residues Glu333 and His334. Residues His334, Asp367, Glu421, and His426 each contribute to the substrate site. Asp367 contacts Zn(2+). His426 provides a ligand contact to Zn(2+).

The protein belongs to the histidinol dehydrogenase family. Requires Zn(2+) as cofactor.

It catalyses the reaction L-histidinol + 2 NAD(+) + H2O = L-histidine + 2 NADH + 3 H(+). The protein operates within amino-acid biosynthesis; L-histidine biosynthesis; L-histidine from 5-phospho-alpha-D-ribose 1-diphosphate: step 9/9. In terms of biological role, catalyzes the sequential NAD-dependent oxidations of L-histidinol to L-histidinaldehyde and then to L-histidine. The sequence is that of Histidinol dehydrogenase from Pseudomonas fluorescens (strain Pf0-1).